We begin with the raw amino-acid sequence, 485 residues long: UDP-N-acetylmuramate--L-alanine ligase (485 aa).

112–118 serves as a coordination point for ATP; it reads GTHGKTT.

The protein belongs to the MurCDEF family.

It is found in the cytoplasm. It catalyses the reaction UDP-N-acetyl-alpha-D-muramate + L-alanine + ATP = UDP-N-acetyl-alpha-D-muramoyl-L-alanine + ADP + phosphate + H(+). Its pathway is cell wall biogenesis; peptidoglycan biosynthesis. Its function is as follows. Cell wall formation. In Variovorax paradoxus (strain S110), this protein is UDP-N-acetylmuramate--L-alanine ligase.